The chain runs to 150 residues: Viral late gene transcription factor 2 (150 aa).

Belongs to the orthopoxvirus VLTF-2/OPG126 family. As to quaternary structure, interacts with the late transcription elongation factor VLTF-4/OPG110. Interacts with the late transcription factors VLTF-1/OPG093.

Its function is as follows. Acts with RNA polymerase to initiate transcription from late gene promoters. The polypeptide is Viral late gene transcription factor 2 (OPG126) (Monkeypox virus).